The primary structure comprises 259 residues: Ubiquitin-conjugating enzyme E2 J2 (259 aa).

Residues 1 to 226 are Cytoplasmic-facing; sequence MSNNSNKRAP…AGLPQANRHH (226 aa). The region spanning 12–162 is the UBC core domain; the sequence is TATQRLKQDY…DKVFCELFPE (151 aa). The active-site Glycyl thioester intermediate is the Cys94. Residues 227-247 traverse the membrane as a helical; Anchor for type IV membrane protein segment; that stretch reads GLLGGALANLFVIVGFAAFAY. At 248–259 the chain is on the lumenal side; it reads TVKYVLRSIAQE.

This sequence belongs to the ubiquitin-conjugating enzyme family. As to quaternary structure, interacts with murid herpesvirus 4 protein K3 (mK3).

It localises to the endoplasmic reticulum membrane. It catalyses the reaction S-ubiquitinyl-[E1 ubiquitin-activating enzyme]-L-cysteine + [E2 ubiquitin-conjugating enzyme]-L-cysteine = [E1 ubiquitin-activating enzyme]-L-cysteine + S-ubiquitinyl-[E2 ubiquitin-conjugating enzyme]-L-cysteine.. It functions in the pathway protein modification; protein ubiquitination. Its function is as follows. Catalyzes the covalent attachment of ubiquitin to other proteins. Seems to function in the selective degradation of misfolded membrane proteins from the endoplasmic reticulum (ERAD). In cooperation with the GATOR2 complex, catalyzes 'Lys-6'-linked ubiquitination of NPRL2. In case of infection by the murid herpesvirus 4, its association with the viral E3 ligase K3 mediates ubiquitination of host surface class I (MHC-I) H-2D(b)/H2-D1 and H-2K(b)/H2-K1 molecules before they exit the endoplasmic reticulum, leading to their degradation by the ERAD system, thus blocking the immune detection of virus-infected cells. The complex formed with the murid herpesvirus 4 protein K3 mediates ubiquitination of lysine, as well as serine and threonine residues present in the cytoplasmic tail of surface class I molecules and promotes ubiquitination of hydroxylated serine or threonine residues via ester bonds instead of the classical isopeptide linkage. This chain is Ubiquitin-conjugating enzyme E2 J2 (Ube2j2), found in Mus musculus (Mouse).